The following is a 608-amino-acid chain: Glutamine--fructose-6-phosphate aminotransferase [isomerizing] (608 aa).

The Nucleophile; for GATase activity role is filled by cysteine 2. The Glutamine amidotransferase type-2 domain maps to 2–217 (CGIVGYSGKK…DKEFVVLTSE (216 aa)). 2 SIS domains span residues 285 to 424 (TKEQ…NKNT) and 453 to 598 (KVQK…VDKP). Lysine 603 acts as the For Fru-6P isomerization activity in catalysis.

As to quaternary structure, homodimer.

Its subcellular location is the cytoplasm. The enzyme catalyses D-fructose 6-phosphate + L-glutamine = D-glucosamine 6-phosphate + L-glutamate. In terms of biological role, catalyzes the first step in hexosamine metabolism, converting fructose-6P into glucosamine-6P using glutamine as a nitrogen source. This chain is Glutamine--fructose-6-phosphate aminotransferase [isomerizing], found in Clostridium acetobutylicum (strain ATCC 824 / DSM 792 / JCM 1419 / IAM 19013 / LMG 5710 / NBRC 13948 / NRRL B-527 / VKM B-1787 / 2291 / W).